Here is a 403-residue protein sequence, read N- to C-terminus: Argininosuccinate synthase (403 aa).

Ala-10–Ser-18 serves as a coordination point for ATP. Tyr-87 lines the L-citrulline pocket. ATP is bound at residue Gly-117. Residues Thr-119, Asn-123, and Asp-124 each contribute to the L-aspartate site. An L-citrulline-binding site is contributed by Asn-123. Residues Arg-127, Ser-175, Ser-184, Glu-260, and Tyr-272 each contribute to the L-citrulline site.

This sequence belongs to the argininosuccinate synthase family. Type 1 subfamily. As to quaternary structure, homotetramer.

Its subcellular location is the cytoplasm. The enzyme catalyses L-citrulline + L-aspartate + ATP = 2-(N(omega)-L-arginino)succinate + AMP + diphosphate + H(+). It participates in amino-acid biosynthesis; L-arginine biosynthesis; L-arginine from L-ornithine and carbamoyl phosphate: step 2/3. This is Argininosuccinate synthase from Bacillus licheniformis (strain ATCC 14580 / DSM 13 / JCM 2505 / CCUG 7422 / NBRC 12200 / NCIMB 9375 / NCTC 10341 / NRRL NRS-1264 / Gibson 46).